The following is a 274-amino-acid chain: uncharacterized protein (274 aa).

The first 17 residues, methionine 1–alanine 17, serve as a signal peptide directing secretion. Cysteine 18 carries the N-palmitoyl cysteine lipid modification. A lipid anchor (S-diacylglycerol cysteine) is attached at cysteine 18. Residues cysteine 18 to asparagine 169 are disordered. Residues aspartate 25–aspartate 76 show a composition bias toward basic and acidic residues. A compositionally biased stretch (low complexity) spans serine 91–asparagine 169.

Its subcellular location is the cell membrane. This is an uncharacterized protein from Staphylococcus saprophyticus subsp. saprophyticus (strain ATCC 15305 / DSM 20229 / NCIMB 8711 / NCTC 7292 / S-41).